The sequence spans 93 residues: Phosphoribosyl-ATP pyrophosphatase (93 aa).

This sequence belongs to the PRA-PH family.

The protein resides in the cytoplasm. The catalysed reaction is 1-(5-phospho-beta-D-ribosyl)-ATP + H2O = 1-(5-phospho-beta-D-ribosyl)-5'-AMP + diphosphate + H(+). Its pathway is amino-acid biosynthesis; L-histidine biosynthesis; L-histidine from 5-phospho-alpha-D-ribose 1-diphosphate: step 2/9. In Mycolicibacterium smegmatis (strain ATCC 700084 / mc(2)155) (Mycobacterium smegmatis), this protein is Phosphoribosyl-ATP pyrophosphatase.